The sequence spans 1042 residues: Protein phosphatase Slingshot homolog 1 (1042 aa).

Positions 1–12 are enriched in polar residues; it reads MALVTLQRSPTP. The interval 1–29 is disordered; sequence MALVTLQRSPTPSAASSSASNSELEAGSD. Residue alanine 2 is modified to N-acetylalanine. Residues 13–22 show a composition bias toward low complexity; the sequence is SAASSSASNS. Phosphoserine is present on residues serine 37 and serine 57. Residues 249–304 enclose the DEK-C domain; the sequence is ERTERLIKAKLRSIMMSQDLENVTSKEIRNELEKQMNCNLKEFKEFIDNEMLLILG. In terms of domain architecture, Tyrosine-protein phosphatase spans 308 to 449; it reads KPSLIFDHLY…LSEYEGILDA (142 aa). Catalysis depends on cysteine 393, which acts as the Phosphocysteine intermediate. Position 516 is a phosphoserine (serine 516). Disordered stretches follow at residues 576 to 609, 668 to 766, 858 to 900, and 915 to 942; these read FGNS…ASTQ, MERH…PHCD, IPEE…LDHT, and PTSS…KPGL. Residues 675–693 are compositionally biased toward polar residues; the sequence is SSSAICTQPTFLPHVTSSP. Residues 697-712 are compositionally biased toward low complexity; it reads ASSRSRAPERPASGPA. Residues 886–900 show a composition bias toward polar residues; it reads LQKSPTSTLPRLDHT. The residue at position 889 (serine 889) is a Phosphoserine. The tract at residues 889 to 1042 is interaction with YWHAG; the sequence is SPTSTLPRLD…LKSPSRVNKS (154 aa). Low complexity predominate over residues 917 to 935; the sequence is SSSISSNLTRSSSSDSIHS. Serine 970 is modified (phosphoserine). Polar residues predominate over residues 985 to 995; that stretch reads SSEADTSTIAD. The tract at residues 985-1042 is disordered; that stretch reads SSEADTSTIADSQDAKCGLSSSFLPEPQSAPRDPAATSKSSGKSAPEHLKSPSRVNKS.

It belongs to the protein-tyrosine phosphatase family. Interacts with the 14-3-3 proteins YWHAB, YWHAG, YWHAQ, and YWHAZ. Interaction with 14-3-3 proteins inhibits phosphatase activity and also blocks recruitment to lamellipodia and stimulation by actin. Interacts with actin and this stimulates phosphatase activity. Interacts with LIMK1. Post-translationally, phosphorylated. Inhibitory phosphorylation by PAK4 promotes binding to YWHAZ. Phosphorylation at Ser-970 is decreased by stimuli which promote actin reorganization and lamellipodia formation. Can be dephosphorylated and activated by PPP3CA/calcineurin A. Phosphorylation decreases immediately prior to telophase. Expressed in brain, heart, kidney and thymus. Also expressed at lower levels in liver, skeletal muscle, small intestine and spleen.

Its subcellular location is the cytoplasm. The protein localises to the cytoskeleton. The protein resides in the cleavage furrow. It is found in the midbody. The enzyme catalyses O-phospho-L-tyrosyl-[protein] + H2O = L-tyrosyl-[protein] + phosphate. It carries out the reaction O-phospho-L-seryl-[protein] + H2O = L-seryl-[protein] + phosphate. It catalyses the reaction O-phospho-L-threonyl-[protein] + H2O = L-threonyl-[protein] + phosphate. In terms of biological role, protein phosphatase which regulates actin filament dynamics. Dephosphorylates and activates the actin binding/depolymerizing factor cofilin, which subsequently binds to actin filaments and stimulates their disassembly. Inhibitory phosphorylation of cofilin is mediated by LIMK1, which may also be dephosphorylated and inactivated by this protein. In Mus musculus (Mouse), this protein is Protein phosphatase Slingshot homolog 1.